The following is a 223-amino-acid chain: Large ribosomal subunit protein uL3 (223 aa).

The protein belongs to the universal ribosomal protein uL3 family. Part of the 50S ribosomal subunit. Forms a cluster with proteins L14 and L19.

One of the primary rRNA binding proteins, it binds directly near the 3'-end of the 23S rRNA, where it nucleates assembly of the 50S subunit. The protein is Large ribosomal subunit protein uL3 of Nocardioides sp. (strain ATCC BAA-499 / JS614).